A 726-amino-acid polypeptide reads, in one-letter code: ORC ubiquitin ligase 1 (726 aa).

An RING-type; degenerate zinc finger spans residues 18 to 56 (CHICLGKVRQPVICINNHVFCSICIDLWLKNNSQCPACR). Coiled-coil stretches lie at residues 87 to 129 (LRKT…TILD) and 155 to 270 (ETVA…MNSI). Serine 210 bears the Phosphoserine mark. Disordered regions lie at residues 276–334 (SADG…TSKA) and 436–460 (NVSN…ECFS). Residues 280-290 (KGSKGSEEDVV) show a composition bias toward basic and acidic residues. Positions 304–318 (SSTSSSSHLAKPSSS) are enriched in low complexity. Residues 319-334 (RLCDTSSARQESTSKA) are compositionally biased toward polar residues. Residues 446-457 (DISRSENEKKSE) are compositionally biased toward basic and acidic residues. 5 positions are modified to phosphoserine: serine 526, serine 553, serine 561, serine 568, and serine 570. 2 disordered regions span residues 570-602 (SSQG…DQLE) and 687-726 (QSPW…ATKS). A compositionally biased stretch (basic and acidic residues) spans 579-588 (EPDKLEEKTE). Polar residues predominate over residues 589–602 (LNLSKGSLTNDQLE). A compositionally biased stretch (low complexity) spans 713–726 (SSLSSASPSKATKS). Phosphoserine occurs at positions 719 and 721.

Associates with ORC complex. Binds to chromatin; association is cell cycle-regulated, absent from mitotic chromosomes, is associated with chromatin from G1 and partially released from chromatin from mid S-phase. In terms of processing, auto-ubiquitinated.

It localises to the chromosome. The catalysed reaction is S-ubiquitinyl-[E2 ubiquitin-conjugating enzyme]-L-cysteine + [acceptor protein]-L-lysine = [E2 ubiquitin-conjugating enzyme]-L-cysteine + N(6)-ubiquitinyl-[acceptor protein]-L-lysine.. Its function is as follows. E3 ubiquitin ligase essential for DNA replication origin activation during S phase. Acts as a replication origin selector which selects the origins to be fired and catalyzes the multi-mono-ubiquitination of a subset of chromatin-bound ORC3 and ORC5 during S-phase. In Homo sapiens (Human), this protein is ORC ubiquitin ligase 1.